The following is a 302-amino-acid chain: Ornithine carbamoyltransferase (302 aa).

Carbamoyl phosphate contacts are provided by residues 52–55 (STRT), Gln-79, Arg-103, and 130–133 (HPCQ). Residues Asn-161, Asp-222, and 226-227 (SM) contribute to the L-ornithine site. Carbamoyl phosphate is bound by residues 262-263 (CL) and Arg-290.

This sequence belongs to the aspartate/ornithine carbamoyltransferase superfamily. OTCase family.

It localises to the cytoplasm. The enzyme catalyses carbamoyl phosphate + L-ornithine = L-citrulline + phosphate + H(+). Its pathway is amino-acid biosynthesis; L-arginine biosynthesis; L-arginine from L-ornithine and carbamoyl phosphate: step 1/3. Reversibly catalyzes the transfer of the carbamoyl group from carbamoyl phosphate (CP) to the N(epsilon) atom of ornithine (ORN) to produce L-citrulline. This is Ornithine carbamoyltransferase from Syntrophus aciditrophicus (strain SB).